Here is a 236-residue protein sequence, read N- to C-terminus: Small ribosomal subunit protein uS2c (236 aa).

It belongs to the universal ribosomal protein uS2 family.

Its subcellular location is the plastid. It is found in the chloroplast. The polypeptide is Small ribosomal subunit protein uS2c (rps2) (Vitis vinifera (Grape)).